The chain runs to 419 residues: Serine hydroxymethyltransferase 1 (419 aa).

(6S)-5,6,7,8-tetrahydrofolate is bound by residues L121 and 125-127 (GHL). K230 is modified (N6-(pyridoxal phosphate)lysine). A (6S)-5,6,7,8-tetrahydrofolate-binding site is contributed by 356–358 (SPF).

The protein belongs to the SHMT family. In terms of assembly, homodimer. The cofactor is pyridoxal 5'-phosphate.

The protein resides in the cytoplasm. The enzyme catalyses (6R)-5,10-methylene-5,6,7,8-tetrahydrofolate + glycine + H2O = (6S)-5,6,7,8-tetrahydrofolate + L-serine. It functions in the pathway one-carbon metabolism; tetrahydrofolate interconversion. It participates in amino-acid biosynthesis; glycine biosynthesis; glycine from L-serine: step 1/1. Its function is as follows. Catalyzes the reversible interconversion of serine and glycine with tetrahydrofolate (THF) serving as the one-carbon carrier. This reaction serves as the major source of one-carbon groups required for the biosynthesis of purines, thymidylate, methionine, and other important biomolecules. Also exhibits THF-independent aldolase activity toward beta-hydroxyamino acids, producing glycine and aldehydes, via a retro-aldol mechanism. The chain is Serine hydroxymethyltransferase 1 from Colwellia psychrerythraea (strain 34H / ATCC BAA-681) (Vibrio psychroerythus).